We begin with the raw amino-acid sequence, 1419 residues long: Collagen alpha-1(II) chain (1419 aa).

Positions 1–25 (MIRLGAPQSLVLLTLLIATVLQCQG) are cleaved as a signal peptide. Residues 26-113 (QDARKLGPKG…PGLGGGNFAA (88 aa)) constitute a propeptide, N-terminal propeptide. The disordered stretch occupies residues 28–1168 (ARKLGPKGQK…GQREKGPDPL (1141 aa)). 2 stretches are compositionally biased toward basic and acidic residues: residues 36 to 47 (QKGEPGDIKDII) and 64 to 85 (PRGD…RDGE). A compositionally biased stretch (pro residues) spans 89–104 (PGNPGPPGPPGPPGPP). The residue at position 122 (Lys122) is a 5-hydroxylysine. O-linked (Gal...) hydroxylysine glycosylation is present at Lys122. Low complexity predominate over residues 124–135 (GGAQMGVMQGPM). The triple-helical region stretch occupies residues 133–1146 (GPMGPMGPRG…PGPPGPPGPP (1014 aa)). A compositionally biased stretch (pro residues) spans 140-149 (PRGPPGPAGA). A compositionally biased stretch (low complexity) spans 150–171 (PGPQGFQGNPGEPGEPGVSGPI). Basic and acidic residues predominate over residues 183–197 (PGDDGEAGKPGKAGE). 3 positions are modified to 5-hydroxylysine: Lys219, Lys231, and Lys240. O-linked (Gal...) hydroxylysine glycans are attached at residues Lys219, Lys231, and Lys240. Composition is skewed to low complexity over residues 242 to 252 (ESGSPGENGSP) and 267 to 282 (TGPA…DGQP). Residues 292-301 (GPAGGPGFLG) show a composition bias toward gly residues. Lys306 is subject to 5-hydroxylysine. Residue Lys306 is glycosylated (O-linked (Gal...) hydroxylysine). The span at 335–363 (PAGASGNPGTDGIPGAKGSAGAPGIAGAP) shows a compositional bias: low complexity. Residues 365 to 374 (FPGPRGPPGP) show a composition bias toward pro residues. Over residues 404–417 (ETGPAGPQGAPGPA) the composition is skewed to low complexity. Residues Lys540 and Lys552 each carry the 5-hydroxylysine modification. Residues Lys540 and Lys552 are each glycosylated (O-linked (Gal...) hydroxylysine). Positions 554-563 (LAGAPGLRGL) are enriched in low complexity. 4-hydroxyproline is present on residues Pro591 and Pro600. The residue at position 602 (Pro602) is a 3-hydroxyproline; partial. 4-hydroxyproline occurs at positions 603 and 606. Positions 638–668 (ERGSPGAQGLQGPRGLPGTPGTDGPKGAAGP) are enriched in low complexity. Residues 696–707 (KGDRGDVGEKGP) are compositionally biased toward basic and acidic residues. 2 stretches are compositionally biased toward low complexity: residues 765–780 (AGFA…PGAK) and 809–846 (PTGV…NGNP). Residue Pro839 is modified to 3-hydroxyproline; partial. A 4-hydroxyproline mark is found at Pro840, Pro846, and Pro852. Residues 1001 to 1011 (APGPPGSPGPA) are compositionally biased toward pro residues. Positions 1047–1061 (RGDKGEAGEPGERGL) are enriched in basic and acidic residues. Pro1076 is subject to 3-hydroxyproline; partial. Composition is skewed to low complexity over residues 1080–1089 (SGDQGTSGPA) and 1103–1113 (PSGKDGSNGIP). Pro1113 is subject to 4-hydroxyproline. Pro1118 is subject to 3-hydroxyproline. Pro1119 is modified (4-hydroxyproline). The span at 1131–1148 (AGPPGNPGPPGPPGPPGP) shows a compositional bias: pro residues. A 3-hydroxyproline; partial modification is found at Pro1133. 2 positions are modified to 4-hydroxyproline: Pro1134 and Pro1137. Pro1139 is subject to 3-hydroxyproline; partial. Residues Pro1140 and Pro1143 each carry the 4-hydroxyproline modification. Pro1145 is modified (3-hydroxyproline; partial). At Pro1146 the chain carries 4-hydroxyproline. Positions 1147–1173 (GPGIDMSAFAGLGQREKGPDPLQYMRA) are nonhelical region (C-terminal). The Fibrillar collagen NC1 domain occupies 1185–1419 (VEVDATLKSL…GVDIGPVCFL (235 aa)). Cystine bridges form between Cys1215–Cys1247, Cys1255–Cys1417, and Cys1325–Cys1370. The Ca(2+) site is built by Asp1233, Asn1235, Gln1236, Cys1238, and Asp1241. N-linked (GlcNAc...) asparagine glycosylation occurs at Asn1320.

Belongs to the fibrillar collagen family. In terms of assembly, homotrimers of alpha 1(II) chains. Contains mostly 4-hydroxyproline. Prolines at the third position of the tripeptide repeating unit (G-X-P) are 4-hydroxylated in some or all of the chains. In terms of processing, contains 3-hydroxyproline at a few sites. This modification occurs on the first proline residue in the sequence motif Gly-Pro-Hyp, where Hyp is 4-hydroxyproline. Post-translationally, lysine residues at the third position of the tripeptide repeating unit (G-X-Y) are 5-hydroxylated in some or all of the chains. O-glycosylated on hydroxylated lysine residues. The O-linked glycan consists of a Glc-Gal disaccharide. As to expression, expressed in chondrocytes.

The protein localises to the secreted. Its subcellular location is the extracellular space. It is found in the extracellular matrix. Type II collagen is specific for cartilaginous tissues. It is essential for the normal embryonic development of the skeleton, for linear growth and for the ability of cartilage to resist compressive forces. The protein is Collagen alpha-1(II) chain of Rattus norvegicus (Rat).